We begin with the raw amino-acid sequence, 251 residues long: uncharacterized protein (251 aa).

N-linked (GlcNAc...) asparagine; by host glycosylation is found at Asn-149, Asn-152, and Asn-207. Residues 226 to 246 (YLIFIIIIIIFIILILLWIKY) traverse the membrane as a helical segment.

It belongs to the glycosyltransferase 32 family.

Its subcellular location is the membrane. This is an uncharacterized protein from Acanthamoeba polyphaga (Amoeba).